A 471-amino-acid polypeptide reads, in one-letter code: Ribulose bisphosphate carboxylase large chain (471 aa).

Residues Asn-115 and Thr-165 each contribute to the substrate site. Lys-167 (proton acceptor) is an active-site residue. Lys-169 is a substrate binding site. Residues Lys-193, Asp-195, and Glu-196 each contribute to the Mg(2+) site. At Lys-193 the chain carries N6-carboxylysine. His-286 functions as the Proton acceptor in the catalytic mechanism. Substrate contacts are provided by Arg-287, His-319, and Ser-371.

The protein belongs to the RuBisCO large chain family. Type I subfamily. In terms of assembly, heterohexadecamer of 8 large chains and 8 small chains. The cofactor is Mg(2+).

Its subcellular location is the carboxysome. It carries out the reaction 2 (2R)-3-phosphoglycerate + 2 H(+) = D-ribulose 1,5-bisphosphate + CO2 + H2O. It catalyses the reaction D-ribulose 1,5-bisphosphate + O2 = 2-phosphoglycolate + (2R)-3-phosphoglycerate + 2 H(+). RuBisCO catalyzes two reactions: the carboxylation of D-ribulose 1,5-bisphosphate, the primary event in carbon dioxide fixation, as well as the oxidative fragmentation of the pentose substrate in the photorespiration process. Both reactions occur simultaneously and in competition at the same active site. This Synechococcus sp. (strain CC9605) protein is Ribulose bisphosphate carboxylase large chain.